We begin with the raw amino-acid sequence, 311 residues long: Transcriptional regulatory protein MoaR1 (311 aa).

The ompR/PhoB-type DNA-binding region spans 15-117 (LNATTAGAVQ…SEPPGYRLLI (103 aa)).

The protein belongs to the AfsR/DnrI/RedD regulatory family.

Acts as a positive transcriptional regulator of the molybdopterin biosynthesis moa1 locus, promoting the expression of the moaA1B1C1D1 genes. Binds directly to the moaA1 promoter. The protein is Transcriptional regulatory protein MoaR1 (moaR1) of Mycobacterium tuberculosis (strain ATCC 25618 / H37Rv).